The sequence spans 635 residues: UvrABC system protein C (635 aa).

Positions M1–S14 are enriched in polar residues. A disordered region spans residues M1 to G27. The GIY-YIG domain maps to S40 to V117. The 36-residue stretch at T227–V262 folds into the UVR domain.

This sequence belongs to the UvrC family. In terms of assembly, interacts with UvrB in an incision complex.

Its subcellular location is the cytoplasm. Functionally, the UvrABC repair system catalyzes the recognition and processing of DNA lesions. UvrC both incises the 5' and 3' sides of the lesion. The N-terminal half is responsible for the 3' incision and the C-terminal half is responsible for the 5' incision. This is UvrABC system protein C from Ruegeria sp. (strain TM1040) (Silicibacter sp.).